The chain runs to 148 residues: Ribonuclease P protein component (148 aa).

Residues 119 to 148 (PLPAAPGTMPPARAPRPSSLSPTEPDPRSD) are disordered.

The protein belongs to the RnpA family. In terms of assembly, consists of a catalytic RNA component (M1 or rnpB) and a protein subunit.

The enzyme catalyses Endonucleolytic cleavage of RNA, removing 5'-extranucleotides from tRNA precursor.. Its function is as follows. RNaseP catalyzes the removal of the 5'-leader sequence from pre-tRNA to produce the mature 5'-terminus. It can also cleave other RNA substrates such as 4.5S RNA. The protein component plays an auxiliary but essential role in vivo by binding to the 5'-leader sequence and broadening the substrate specificity of the ribozyme. The chain is Ribonuclease P protein component from Xanthomonas campestris pv. campestris (strain 8004).